The primary structure comprises 522 residues: Maturase K (522 aa).

Belongs to the intron maturase 2 family. MatK subfamily.

It is found in the plastid. Its subcellular location is the chloroplast. Functionally, usually encoded in the trnK tRNA gene intron. Probably assists in splicing its own and other chloroplast group II introns. The chain is Maturase K from Iris domestica (Leopard lily).